We begin with the raw amino-acid sequence, 167 residues long: Signal peptidase complex catalytic subunit SEC11 (167 aa).

Over 1-6 the chain is Cytoplasmic; the sequence is MNIRQQ. The chain crosses the membrane as a helical; Signal-anchor for type II membrane protein span at residues 7–24; that stretch reads LTKFLGLFLTLASAFMFW. The Lumenal portion of the chain corresponds to 25 to 167; the sequence is KGLSVVTNSH…LALSSLLGSE (143 aa). Active-site charge relay system residues include S44, H83, and D109. Residues 153-164 form a C-terminal short (CTS) helix region; the sequence is ALMGMLALSSLL.

Belongs to the peptidase S26B family. Component of the signal peptidase complex (SPC) composed of a catalytic subunit SEC11 and three accessory subunits SPC1, SPC2 and SPC3. The complex induces a local thinning of the ER membrane which is used to measure the length of the signal peptide (SP) h-region of protein substrates. This ensures the selectivity of the complex towards h-regions shorter than 18-20 amino acids. SPC associates with the translocon complex.

The protein resides in the endoplasmic reticulum membrane. It carries out the reaction Cleavage of hydrophobic, N-terminal signal or leader sequences from secreted and periplasmic proteins.. Functionally, catalytic component of the signal peptidase complex (SPC) which catalyzes the cleavage of N-terminal signal sequences from nascent proteins as they are translocated into the lumen of the endoplasmic reticulum. Specifically cleaves N-terminal signal peptides that contain a hydrophobic alpha-helix (h-region) shorter than 18-20 amino acids. In Eremothecium gossypii (strain ATCC 10895 / CBS 109.51 / FGSC 9923 / NRRL Y-1056) (Yeast), this protein is Signal peptidase complex catalytic subunit SEC11 (SEC11).